A 189-amino-acid chain; its full sequence is Peptidyl-tRNA hydrolase (189 aa).

Tyr15 is a binding site for tRNA. The Proton acceptor role is filled by His20. Residues Phe66, Asn68, and Asn114 each contribute to the tRNA site.

The protein belongs to the PTH family. As to quaternary structure, monomer.

The protein resides in the cytoplasm. It carries out the reaction an N-acyl-L-alpha-aminoacyl-tRNA + H2O = an N-acyl-L-amino acid + a tRNA + H(+). Its function is as follows. Hydrolyzes ribosome-free peptidyl-tRNAs (with 1 or more amino acids incorporated), which drop off the ribosome during protein synthesis, or as a result of ribosome stalling. In terms of biological role, catalyzes the release of premature peptidyl moieties from peptidyl-tRNA molecules trapped in stalled 50S ribosomal subunits, and thus maintains levels of free tRNAs and 50S ribosomes. In Dichelobacter nodosus (strain VCS1703A), this protein is Peptidyl-tRNA hydrolase.